An 806-amino-acid chain; its full sequence is Acetyl-CoA decarbonylase/synthase complex subunit alpha 1 (806 aa).

[4Fe-4S] cluster contacts are provided by C73, C76, C77, C79, C84, and C94. H117 provides a ligand contact to CO. H250, C278, and C323 together coordinate [Ni-4Fe-4S] cluster. 2 consecutive 4Fe-4S ferredoxin-type domains span residues 407 to 436 (DEQM…IPEA) and 445 to 475 (YSYL…LSVI). Residues C417, C420, C423, C427, C455, C458, C461, and C465 each coordinate [4Fe-4S] cluster. Positions 523, 552, and 587 each coordinate [Ni-4Fe-4S] cluster.

This sequence belongs to the Ni-containing carbon monoxide dehydrogenase family. As to quaternary structure, heterotetramer of two alpha and two epsilon subunits. The ACDS complex is made up of alpha, epsilon, beta, gamma and delta subunits with a probable stoichiometry of (alpha(2)epsilon(2))(4)-beta(8)-(gamma(1)delta(1))(8). It depends on [4Fe-4S] cluster as a cofactor. [Ni-4Fe-4S] cluster is required as a cofactor.

It carries out the reaction CO + 2 oxidized [2Fe-2S]-[ferredoxin] + H2O = 2 reduced [2Fe-2S]-[ferredoxin] + CO2 + 2 H(+). It functions in the pathway one-carbon metabolism; methanogenesis from acetate. Functionally, part of the ACDS complex that catalyzes the reversible cleavage of acetyl-CoA, allowing growth on acetate as sole source of carbon and energy. The alpha-epsilon subcomponent functions as a carbon monoxide dehydrogenase. The sequence is that of Acetyl-CoA decarbonylase/synthase complex subunit alpha 1 from Methanosarcina thermophila.